Reading from the N-terminus, the 145-residue chain is Regulator of sigma D (145 aa).

The protein belongs to the Rsd/AlgQ family. Interacts with RpoD.

Its subcellular location is the cytoplasm. In terms of biological role, binds RpoD and negatively regulates RpoD-mediated transcription activation by preventing the interaction between the primary sigma factor RpoD with the catalytic core of the RNA polymerase and with promoter DNA. May be involved in replacement of the RNA polymerase sigma subunit from RpoD to RpoS during the transition from exponential growth to the stationary phase. In Sodalis glossinidius (strain morsitans), this protein is Regulator of sigma D.